The sequence spans 152 residues: Cytochrome c-type biogenesis CcmH-like mitochondrial protein (152 aa).

Topologically, residues 1 to 83 (MATEEDVKQR…ILYTPKFDLQ (83 aa)) are mitochondrial intermembrane. Heme is bound by residues Cys26 and Cys29. A helical membrane pass occupies residues 84-104 (TAAIWLSPVIVGGVAAGVWAY). At 105-152 (QKHRQRTNVHIMALNLVRGVPLTPREKETMLDVLTPPPPANKWWWPGK) the chain is on the mitochondrial matrix side.

This sequence belongs to the CcmH/CycL/Ccl2/NrfF family.

It is found in the mitochondrion inner membrane. In terms of biological role, plays a role in mitochondrial cytochrome c maturation. Probable component of a heme lyase complex involved in the reduction of apocytochrome c. The protein is Cytochrome c-type biogenesis CcmH-like mitochondrial protein of Oryza sativa subsp. japonica (Rice).